A 343-amino-acid polypeptide reads, in one-letter code: UPF0157 protein YqkA (343 aa).

In terms of domain architecture, N-acetyltransferase spans 8 to 144; it reads KEATIAREIL…VKAAQGLLLS (137 aa). The tract at residues 135-343 is UPF0157; it reads VKAAQGLLLS…ENDENGGFTL (209 aa).

In the C-terminal section; belongs to the UPF0157 (GrpB) family.

The chain is UPF0157 protein YqkA (yqkA) from Bacillus subtilis (strain 168).